Reading from the N-terminus, the 93-residue chain is uncharacterized protein (93 aa).

This is an uncharacterized protein from Sulfolobus islandicus filamentous virus (isolate Iceland/Hveragerdi) (SIFV).